We begin with the raw amino-acid sequence, 338 residues long: DNA-directed RNA polymerase subunit alpha (338 aa).

The segment at 1–225 (MLISQRPTLT…ELFGLARELN (225 aa)) is alpha N-terminal domain (alpha-NTD). The tract at residues 242–338 (YIAAYSMPIE…YIDVEPEDAE (97 aa)) is alpha C-terminal domain (alpha-CTD). The tract at residues 314-338 (FDPSTLEGYDAETGGYIDVEPEDAE) is disordered.

This sequence belongs to the RNA polymerase alpha chain family. In terms of assembly, homodimer. The RNAP catalytic core consists of 2 alpha, 1 beta, 1 beta' and 1 omega subunit. When a sigma factor is associated with the core the holoenzyme is formed, which can initiate transcription.

It carries out the reaction RNA(n) + a ribonucleoside 5'-triphosphate = RNA(n+1) + diphosphate. Functionally, DNA-dependent RNA polymerase catalyzes the transcription of DNA into RNA using the four ribonucleoside triphosphates as substrates. The protein is DNA-directed RNA polymerase subunit alpha of Corynebacterium efficiens (strain DSM 44549 / YS-314 / AJ 12310 / JCM 11189 / NBRC 100395).